A 201-amino-acid chain; its full sequence is Kunitz type trypsin inhibitor 104 (201 aa).

A signal peptide spans 1-24 (MSTRSLTIFILAHVWLLMATTSIA). Disulfide bonds link Cys63/Cys110, Cys161/Cys173, and Cys166/Cys169.

Belongs to the protease inhibitor I3 (leguminous Kunitz-type inhibitor) family. Interacts with CP.

It localises to the secreted. The protein localises to the extracellular space. Its subcellular location is the apoplast. Its function is as follows. Protease inhibitor involved in the control of mycorrhiza establishment and arbuscule development during root colonization by arbuscular mycorrhizal (AM) fungi (e.g. Rhizophagus irregularis). This chain is Kunitz type trypsin inhibitor 104, found in Medicago truncatula (Barrel medic).